Reading from the N-terminus, the 142-residue chain is MRGAVLRLGAARGQLRLEQEHLLEDIAHVRQRLDDEARQRQEAEAAARALARFAQEAEAARVELQKKAQALQEECGYLRRHHQEEAQAEARDALKCDVTSALREIRAQLEGHAVQSTLQQEEWFRVRLDRLSEAAKVNTDAM.

Residues 1 to 142 (MRGAVLRLGA…EAAKVNTDAM (142 aa)) form the IF rod domain. Residues 26 to 74 (IAHVRQRLDDEARQRQEAEAAARALARFAQEAEAARVELQKKAQALQEE) adopt a coiled-coil conformation.

The protein belongs to the intermediate filament family. Forms heterodimers with NEFL; which can further hetero-oligomerize (in vitro). Forms heterodimers with INA (in vitro). Post-translationally, there are a number of repeats of the tripeptide K-S-P, NFH is phosphorylated on a number of the serines in this motif. It is thought that phosphorylation of NFH results in the formation of interfilament cross bridges that are important in the maintenance of axonal caliber. In terms of processing, phosphorylation seems to play a major role in the functioning of the larger neurofilament polypeptides (NF-M and NF-H), the levels of phosphorylation being altered developmentally and coincidentally with a change in the neurofilament function. Phosphorylated in the head and rod regions by the PKC kinase PKN1, leading to the inhibition of polymerization.

It is found in the cytoplasm. The protein localises to the cytoskeleton. It localises to the cell projection. The protein resides in the axon. In terms of biological role, neurofilaments usually contain three intermediate filament proteins: NEFL, NEFM, and NEFH which are involved in the maintenance of neuronal caliber. NEFH has an important function in mature axons that is not subserved by the two smaller NF proteins. May additionally cooperate with the neuronal intermediate filament proteins PRPH and INA to form neuronal filamentous networks. The sequence is that of Neurofilament heavy polypeptide (NEFH) from Sus scrofa (Pig).